The following is a 229-amino-acid chain: Cytidylate kinase (229 aa).

12 to 20 (GPSGSGKGT) provides a ligand contact to ATP.

This sequence belongs to the cytidylate kinase family. Type 1 subfamily.

Its subcellular location is the cytoplasm. The catalysed reaction is CMP + ATP = CDP + ADP. It catalyses the reaction dCMP + ATP = dCDP + ADP. The sequence is that of Cytidylate kinase from Pseudomonas fluorescens (strain Pf0-1).